The primary structure comprises 485 residues: Glutamyl-tRNA(Gln) amidotransferase subunit A (485 aa).

Residues Lys79 and Ser154 each act as charge relay system in the active site. Ser178 acts as the Acyl-ester intermediate in catalysis.

This sequence belongs to the amidase family. GatA subfamily. As to quaternary structure, heterotrimer of A, B and C subunits.

It catalyses the reaction L-glutamyl-tRNA(Gln) + L-glutamine + ATP + H2O = L-glutaminyl-tRNA(Gln) + L-glutamate + ADP + phosphate + H(+). Its function is as follows. Allows the formation of correctly charged Gln-tRNA(Gln) through the transamidation of misacylated Glu-tRNA(Gln) in organisms which lack glutaminyl-tRNA synthetase. The reaction takes place in the presence of glutamine and ATP through an activated gamma-phospho-Glu-tRNA(Gln). This Clostridium botulinum (strain Kyoto / Type A2) protein is Glutamyl-tRNA(Gln) amidotransferase subunit A.